Here is a 282-residue protein sequence, read N- to C-terminus: 4-hydroxybenzoate octaprenyltransferase (282 aa).

The next 9 helical transmembrane spans lie at 17-37, 40-60, 90-110, 113-133, 135-155, 163-183, 207-227, 231-251, and 262-282; these read IGILLLWYPTAWALWMANQGF, IDLLMIFLLGTVFMRSAGCVI, AFILLFILLCASLLLLLKLPI, FYFAVISVLITFLYPFCKRFL, APQLILGLAFSMGIPMAFIAS, FIVLFLINFSWIIAYDTMYAM, LIIALLLIFLHSLWLVWAINK, WFFYLLWCTAAGILTYQLKLI, and AFLVSGYYGLVMWFAVGLALI.

The protein belongs to the UbiA prenyltransferase family. Requires Mg(2+) as cofactor.

The protein localises to the cell inner membrane. The enzyme catalyses all-trans-octaprenyl diphosphate + 4-hydroxybenzoate = 4-hydroxy-3-(all-trans-octaprenyl)benzoate + diphosphate. It functions in the pathway cofactor biosynthesis; ubiquinone biosynthesis. Catalyzes the prenylation of para-hydroxybenzoate (PHB) with an all-trans polyprenyl group. Mediates the second step in the final reaction sequence of ubiquinone-8 (UQ-8) biosynthesis, which is the condensation of the polyisoprenoid side chain with PHB, generating the first membrane-bound Q intermediate 3-octaprenyl-4-hydroxybenzoate. This chain is 4-hydroxybenzoate octaprenyltransferase, found in Legionella pneumophila subsp. pneumophila (strain Philadelphia 1 / ATCC 33152 / DSM 7513).